The sequence spans 255 residues: Hydroxyacylglutathione hydrolase (255 aa).

Zn(2+) contacts are provided by H56, H58, D60, H61, H114, D133, and H171.

This sequence belongs to the metallo-beta-lactamase superfamily. Glyoxalase II family. In terms of assembly, monomer. Requires Zn(2+) as cofactor.

It catalyses the reaction an S-(2-hydroxyacyl)glutathione + H2O = a 2-hydroxy carboxylate + glutathione + H(+). It participates in secondary metabolite metabolism; methylglyoxal degradation; (R)-lactate from methylglyoxal: step 2/2. In terms of biological role, thiolesterase that catalyzes the hydrolysis of S-D-lactoyl-glutathione to form glutathione and D-lactic acid. The sequence is that of Hydroxyacylglutathione hydrolase from Bradyrhizobium diazoefficiens (strain JCM 10833 / BCRC 13528 / IAM 13628 / NBRC 14792 / USDA 110).